Here is a 234-residue protein sequence, read N- to C-terminus: Protein fmp52, mitochondrial (234 aa).

A mitochondrion-targeting transit peptide spans 1 to 36 (MANVALLGCTGMVGSHILTHLLGNSSVARIDTISRR).

It belongs to the FMP52 family.

The protein localises to the mitochondrion outer membrane. The sequence is that of Protein fmp52, mitochondrial (fmp52) from Aspergillus niger (strain ATCC MYA-4892 / CBS 513.88 / FGSC A1513).